A 136-amino-acid chain; its full sequence is Probable intron-encoded DNA endonuclease 3 (136 aa).

This sequence belongs to the LAGLIDADG endonuclease family.

The protein resides in the mitochondrion. In terms of biological role, mitochondrial DNA endonuclease involved in intron homing. This chain is Probable intron-encoded DNA endonuclease 3 (hegI3), found in Mycosarcoma maydis (Corn smut fungus).